The sequence spans 452 residues: Adenylosuccinate synthetase (452 aa).

Residues 40–46 (GDEGKGK) and 68–70 (GHT) contribute to the GTP site. The active-site Proton acceptor is the Asp41. Positions 41 and 68 each coordinate Mg(2+). IMP is bound by residues 41 to 44 (DEGK), 66 to 69 (NAGH), Thr158, Arg172, Asn250, Thr265, and Arg329. His69 functions as the Proton donor in the catalytic mechanism. Residue 325–331 (VTTKRKR) participates in substrate binding. GTP-binding positions include Arg331, 357–359 (KLD), and 440–442 (GVG).

This sequence belongs to the adenylosuccinate synthetase family. As to quaternary structure, homodimer. It depends on Mg(2+) as a cofactor.

Its subcellular location is the cytoplasm. It carries out the reaction IMP + L-aspartate + GTP = N(6)-(1,2-dicarboxyethyl)-AMP + GDP + phosphate + 2 H(+). The protein operates within purine metabolism; AMP biosynthesis via de novo pathway; AMP from IMP: step 1/2. Functionally, plays an important role in the de novo pathway and in the salvage pathway of purine nucleotide biosynthesis. Catalyzes the first committed step in the biosynthesis of AMP from IMP. The polypeptide is Adenylosuccinate synthetase (Drosophila grimshawi (Hawaiian fruit fly)).